The chain runs to 718 residues: Nucleolar protein 11 (718 aa).

Lys346 is subject to N6-methyllysine.

As to quaternary structure, interacts with UTP4. Interacts with FBL/fibrillarin in a transcription-dependent manner. May associate with the proposed t-UTP subcomplex of the SSU processome containing at least UTP4, WDR43, HEATR1, UTP15, WDR75.

It localises to the nucleus. It is found in the nucleolus. Its function is as follows. Ribosome biogenesis factor. May be required for both optimal rDNA transcription and small subunit (SSU) pre-rRNA processing at sites A', A0, 1 and 2b. This Bos taurus (Bovine) protein is Nucleolar protein 11 (NOL11).